The sequence spans 400 residues: Acetate kinase (400 aa).

Position 10 (Asn-10) interacts with Mg(2+). Residue Lys-17 coordinates ATP. Arg-91 lines the substrate pocket. The Proton donor/acceptor role is filled by Asp-150. Residues 210–214 (HLGNG), 285–287 (DCR), and 333–337 (GIGEN) contribute to the ATP site. Glu-387 serves as a coordination point for Mg(2+).

This sequence belongs to the acetokinase family. In terms of assembly, homodimer. The cofactor is Mg(2+). Requires Mn(2+) as cofactor.

The protein localises to the cytoplasm. It carries out the reaction acetate + ATP = acetyl phosphate + ADP. It functions in the pathway metabolic intermediate biosynthesis; acetyl-CoA biosynthesis; acetyl-CoA from acetate: step 1/2. Functionally, catalyzes the formation of acetyl phosphate from acetate and ATP. Can also catalyze the reverse reaction. This chain is Acetate kinase, found in Photorhabdus laumondii subsp. laumondii (strain DSM 15139 / CIP 105565 / TT01) (Photorhabdus luminescens subsp. laumondii).